We begin with the raw amino-acid sequence, 124 residues long: MAPREPGFAGALPIDGYGPGFFRIAGAVHRGGLLIHAEAAMPWTGFDDLAALRALAGQVDLLLCGMGADIAHLPKGLQVELEALGVMAEPMSTASAARHYNVLLSEGRRVGAALLPMPGAVPTA.

Not required for the biogenesis of c-type cytochromes. This is an uncharacterized protein from Rhodobacter capsulatus (strain ATCC BAA-309 / NBRC 16581 / SB1003).